The following is a 274-amino-acid chain: Nitrogenase iron protein (274 aa).

Position 8-15 (8-15 (GKGGIGKS)) interacts with ATP. C94 provides a ligand contact to [4Fe-4S] cluster. Position 97 is an ADP-ribosylarginine; by dinitrogenase reductase ADP-ribosyltransferase (R97). Residue C131 participates in [4Fe-4S] cluster binding.

It belongs to the NifH/BchL/ChlL family. In terms of assembly, homodimer. [4Fe-4S] cluster is required as a cofactor. In terms of processing, the reversible ADP-ribosylation of Arg-97 inactivates the nitrogenase reductase and regulates nitrogenase activity.

It catalyses the reaction N2 + 8 reduced [2Fe-2S]-[ferredoxin] + 16 ATP + 16 H2O = H2 + 8 oxidized [2Fe-2S]-[ferredoxin] + 2 NH4(+) + 16 ADP + 16 phosphate + 6 H(+). In terms of biological role, the key enzymatic reactions in nitrogen fixation are catalyzed by the nitrogenase complex, which has 2 components: the iron protein and the molybdenum-iron protein. The sequence is that of Nitrogenase iron protein from Chlorobaculum parvum (strain DSM 263 / NCIMB 8327) (Chlorobium vibrioforme subsp. thiosulfatophilum).